We begin with the raw amino-acid sequence, 708 residues long: Large T antigen (708 aa).

Methionine 1 is subject to N-acetylmethionine; by host. Residues 12-75 (QLMDLLGLER…VKYAHQPDFG (64 aa)) form the J domain. The binding of LT to the CUL7 complex stretch occupies residues 63-89 (EDGVKYAHQPDFGGFWDATEIPTYGTD). An LXCXE motif motif is present at residues 103-107 (LFCSE). Serine 106, serine 112, serine 120, and serine 123 each carry phosphoserine; by host. The segment at 109 to 134 (MPSSDDEATADSQHSTPPKKKRKVED) is disordered. Threonine 124 is subject to Phosphothreonine; by host. The short motif at 125–132 (PPKKKRKV) is the Nuclear localization signal element. The T-ag OBD DNA-binding region spans 139–254 (PSELLSFLSH…EESLPGGLKE (116 aa)). The T-ag D1-type zinc-finger motif lies at 265–357 (TKQVSWKLVT…KRVDSLQLTR (93 aa)). Zn(2+) contacts are provided by cysteine 302, cysteine 305, histidine 313, and histidine 317. The tract at residues 337-672 (CQQAVDTVLA…IDSQSQGSFQ (336 aa)) is binding to host TP53 protein. One can recognise an SF3 helicase domain in the interval 400 to 560 (KMDSVVYDFL…DYLKHCLERS (161 aa)). Positions 418–616 (KKRYWLFKGP…FSLSVYQKMK (199 aa)) are ATPase activity. Residue 426 to 433 (GPIDSGKT) coordinates ATP. Residues 627-708 (DWLRNSDDDD…PPTPPPEPET (82 aa)) are C-terminal region. The segment at 630–685 (RNSDDDDEDSQENADKNEDGGEKNMEDSGHETGIDSQSQGSFQAPQSSQSVHDHNQ) is disordered. Phosphoserine; by host is present on serine 639. The segment covering 642–662 (NADKNEDGGEKNMEDSGHETG) has biased composition (basic and acidic residues). Polar residues predominate over residues 663–679 (IDSQSQGSFQAPQSSQS). 3 positions are modified to phosphoserine; by host: serine 676, serine 677, and serine 679. N6-acetyllysine; by host is present on lysine 697. Residues 699–708 (PPTPPPEPET) form a CPD region. At threonine 701 the chain carries Phosphothreonine; by host.

In terms of assembly, isoform large T antigen forms homohexamers in the presence of ATP. Interacts with host HDAC1. Interacts (via LXCXE domain) with host RB1; the interaction induces the aberrant dissociation of RB1-E2F1 complex thereby disrupting RB1's activity. Interacts (via LXCXE domain) with host pRB-related proteins RBL1 and RBL2. Interacts (via C-terminus) with host TOP1 and POLA1 allowing DNA replication. Interacts with host TP53, inhibiting TP53 binding to DNA. Interacts with host preinitiation complex components TBP, TFIIA and TFIID to regulate transcription initiation. LT interacts (via CPD region) with host FBW7gamma isoform (via WD repeats); seems to function as a competitive inhibitor of FBW7gamma function for physiologic substrates. LT interacts with host E3 ubiquitin ligase CUL7; this interaction seems to inhibit CUL7. Component of a SCF(CUL7)-like complex composed of SV40 Lt and host proteins CUL7, SKP1, RBX1, and FBXW8. LT interacts with host BUB1; this interaction induces activation of a DNA damage response and promotes p53 stabilization and phosphorylation. Interacts with host FAM111A and this interaction is required for efficient viral replication and sustained viral gene expression in restrictive cell types. It depends on Mg(2+) as a cofactor. Phosphorylated on both serine and threonine residues. Phosphorylation on Ser-120 and Ser-123 inhibits viral replication, while phosphorylation on Thr-124 enhances replication by activating the DNA-binding domain. Phosphorylation on Thr-701 is required for binding to host FBW7gamma isoform. Dephosphorylated preferentially by PP2A on Ser-120, Ser-123, Ser-677 and perhaps Ser-679. Small t antigen inhibits the dephosphorylation by the AC form of PP2A. In terms of processing, O-Glycosylated near the C-terminal region. Post-translationally, acetylated by CBP in a TP53-dependent manner.

It localises to the host nucleus. It catalyses the reaction Couples ATP hydrolysis with the unwinding of duplex DNA by translocating in the 3'-5' direction.. It carries out the reaction ATP + H2O = ADP + phosphate + H(+). Its activity is regulated as follows. DNA helicase activity is inhibited by ATP-gamma-S. Its function is as follows. Isoform large T antigen is a key early protein essential for both driving viral replication and inducing cellular transformation. Plays a role in viral genome replication by driving entry of quiescent cells into the cell cycle and by autoregulating the synthesis of viral early mRNA. Displays highly oncogenic activities by corrupting the host cellular checkpoint mechanisms that guard cell division and the transcription, replication, and repair of DNA. Participates in the modulation of cellular gene expression preceeding viral DNA replication. This step involves binding to host key cell cycle regulators retinoblastoma protein RB1/pRb and TP53. Induces the disassembly of host E2F1 transcription factors from RB1, thus promoting transcriptional activation of E2F1-regulated S-phase genes. Inhibits host TP53 binding to DNA, abrogating the ability of TP53 to stimulate gene expression. Plays the role of a TFIID-associated factor (TAF) in transcription initiation for all three RNA polymerases, by stabilizing the TBP-TFIIA complex on promoters. Initiates viral DNA replication and unwinding via interactions with the viral origin of replication. Binds two adjacent sites in the SV40 origin. The replication fork movement is facilitated by Large T antigen helicase activity. Has processive 3'-5' DNA helicase activity which requires a short 3' single-stranded region and ATP; other (d)NTPs can partially replace ATP. Activates the transcription of viral late mRNA, through host TBP and TFIIA stabilization. Interferes with histone deacetylation mediated by HDAC1, leading to activation of transcription. May inactivate the growth-suppressing properties of the E3 ubiquitin ligase CUL7. In terms of biological role, isoform 17kT antigen targets host RBL2 for degradation and promotes cell proliferation. Transactivates host cyclin A promoter through its J domain. Unwinds G4 DNA (planar arrays of 4 guanine bases stabilized by hydrogen bonds, parallel and antiparallel arrays were tested); unwinding occurs in the 3'-5' direction, requires a 3' single-stranded end and hydrolyzable ATP. This chain is Large T antigen, found in Macaca (macaques).